A 184-amino-acid polypeptide reads, in one-letter code: Photosystem I assembly protein Ycf4 (184 aa).

Transmembrane regions (helical) follow at residues 22–42 (FCWACILFLGSIGFLLVGISS) and 57–77 (ILFFPQGIVMCFYGIAGLFIS).

This sequence belongs to the Ycf4 family.

The protein localises to the plastid. The protein resides in the chloroplast thylakoid membrane. Functionally, seems to be required for the assembly of the photosystem I complex. The protein is Photosystem I assembly protein Ycf4 of Illicium oligandrum (Star anise).